Reading from the N-terminus, the 106-residue chain is UPF0145 protein (106 aa).

This sequence belongs to the UPF0145 family.

The protein is UPF0145 protein of Listeria grayi (Listeria murrayi).